The sequence spans 520 residues: Pleckstrin homology domain-containing family A member 8 (520 aa).

In terms of domain architecture, PH spans 1–93 (MEGVLYKWTN…WLVALGSAKA (93 aa)). Residue threonine 139 is modified to Phosphothreonine. Serine 145 carries the post-translational modification Phosphoserine. Threonine 153 is subject to Phosphothreonine. The span at 275 to 285 (GEESLGNHDSD) shows a compositional bias: basic and acidic residues. A disordered region spans residues 275–305 (GEESLGNHDSDLAQPELHSTSSSPESHWEED). The interval 311–520 (TFFSTMNTSF…VHGLESDEVV (210 aa)) is glycolipid transfer protein homology domain.

In terms of assembly, homodimer. Interacts with ARF1; the interaction together with phosphatidylinositol 4-phosphate binding is required for FAPP2 GlcCer transfer ability.

The protein localises to the cytoplasm. It localises to the golgi apparatus. The protein resides in the trans-Golgi network membrane. It is found in the membrane. Functionally, cargo transport protein that is required for apical transport from the trans-Golgi network (TGN). Transports AQP2 from the trans-Golgi network (TGN) to sites of AQP2 phosphorylation. Mediates the non-vesicular transport of glucosylceramide (GlcCer) from the trans-Golgi network (TGN) to the plasma membrane and plays a pivotal role in the synthesis of complex glycosphingolipids. Binding of both phosphatidylinositol 4-phosphate (PIP) and ARF1 are essential for the GlcCer transfer ability. Also required for primary cilium formation, possibly by being involved in the transport of raft lipids to the apical membrane, and for membrane tubulation. The chain is Pleckstrin homology domain-containing family A member 8 (PLEKHA8) from Bos taurus (Bovine).